Here is a 908-residue protein sequence, read N- to C-terminus: UPF0182 protein NT01CX_0852 (908 aa).

The next 7 membrane-spanning stretches (helical) occupy residues 8 to 28 (IGLF…VNVI), 47 to 67 (FTSV…AIKT), 96 to 116 (IINA…SLGY), 157 to 177 (LLSL…FLNI), 209 to 229 (LAIL…IKAW), 253 to 273 (FYIA…FSIL), and 280 to 300 (IISC…VSGA).

Belongs to the UPF0182 family.

It is found in the cell membrane. The polypeptide is UPF0182 protein NT01CX_0852 (Clostridium novyi (strain NT)).